The chain runs to 426 residues: Serine--tRNA ligase (426 aa).

230–232 (TAE) serves as a coordination point for L-serine. 261–263 (RSE) serves as a coordination point for ATP. Glu284 contacts L-serine. 348-351 (EISS) contacts ATP. Residue Ser384 coordinates L-serine.

It belongs to the class-II aminoacyl-tRNA synthetase family. Type-1 seryl-tRNA synthetase subfamily. As to quaternary structure, homodimer. The tRNA molecule binds across the dimer.

It localises to the cytoplasm. The catalysed reaction is tRNA(Ser) + L-serine + ATP = L-seryl-tRNA(Ser) + AMP + diphosphate + H(+). The enzyme catalyses tRNA(Sec) + L-serine + ATP = L-seryl-tRNA(Sec) + AMP + diphosphate + H(+). The protein operates within aminoacyl-tRNA biosynthesis; selenocysteinyl-tRNA(Sec) biosynthesis; L-seryl-tRNA(Sec) from L-serine and tRNA(Sec): step 1/1. Its function is as follows. Catalyzes the attachment of serine to tRNA(Ser). Is also able to aminoacylate tRNA(Sec) with serine, to form the misacylated tRNA L-seryl-tRNA(Sec), which will be further converted into selenocysteinyl-tRNA(Sec). The protein is Serine--tRNA ligase of Phenylobacterium zucineum (strain HLK1).